Here is a 469-residue protein sequence, read N- to C-terminus: Argininosuccinate lyase (469 aa).

The protein belongs to the lyase 1 family. Argininosuccinate lyase subfamily.

It localises to the cytoplasm. The catalysed reaction is 2-(N(omega)-L-arginino)succinate = fumarate + L-arginine. The protein operates within amino-acid biosynthesis; L-arginine biosynthesis; L-arginine from L-ornithine and carbamoyl phosphate: step 3/3. The sequence is that of Argininosuccinate lyase from Burkholderia cenocepacia (strain ATCC BAA-245 / DSM 16553 / LMG 16656 / NCTC 13227 / J2315 / CF5610) (Burkholderia cepacia (strain J2315)).